The sequence spans 803 residues: Phenylalanine--tRNA ligase beta subunit (803 aa).

A tRNA-binding domain is found at 39–152; it reads TPGFQKVVAG…PDASPGADAA (114 aa). The 75-residue stretch at 406–480 folds into the B5 domain; sequence RQPVTIELRP…RLYGYNRIPV (75 aa). Mg(2+) is bound by residues D458, D464, E467, and E468. The region spanning 709-802 is the FDX-ACB domain; it reads PRFPAVERDL…LEERLGASLR (94 aa).

The protein belongs to the phenylalanyl-tRNA synthetase beta subunit family. Type 1 subfamily. As to quaternary structure, tetramer of two alpha and two beta subunits. The cofactor is Mg(2+).

It is found in the cytoplasm. It catalyses the reaction tRNA(Phe) + L-phenylalanine + ATP = L-phenylalanyl-tRNA(Phe) + AMP + diphosphate + H(+). The sequence is that of Phenylalanine--tRNA ligase beta subunit from Moorella thermoacetica (strain ATCC 39073 / JCM 9320).